We begin with the raw amino-acid sequence, 314 residues long: Peroxisome biogenesis factor 10 (314 aa).

Residues Met-1–Glu-7 lie on the Peroxisomal matrix side of the membrane. Residues Ile-8–Leu-37 form a helical membrane-spanning segment. A topological domain (cytoplasmic) is located at residue Gly-38. A helical transmembrane segment spans residues Gln-39–Ser-60. Topologically, residues Thr-61–Pro-90 are peroxisomal matrix. Residues Ser-91–Ile-110 form a helical membrane-spanning segment. The Cytoplasmic segment spans residues Gln-111–Asp-142. Residues Val-143 to Thr-166 form a helical membrane-spanning segment. Topologically, residues Gly-167–Arg-197 are peroxisomal matrix. The helical transmembrane segment at Phe-198–Phe-218 threads the bilayer. Over Leu-219–Leu-314 the chain is Cytoplasmic. Positions 255, 258, 269, 271, 274, 277, 296, and 299 each coordinate Zn(2+). The RING-type zinc-finger motif lies at Cys-255–Arg-300.

It belongs to the pex2/pex10/pex12 family. Component of the PEX2-PEX10-PEX12 retrotranslocation channel.

It localises to the peroxisome membrane. The enzyme catalyses S-ubiquitinyl-[E2 ubiquitin-conjugating enzyme]-L-cysteine + [acceptor protein]-L-lysine = [E2 ubiquitin-conjugating enzyme]-L-cysteine + N(6)-ubiquitinyl-[acceptor protein]-L-lysine.. It functions in the pathway protein modification; protein ubiquitination. Its activity is regulated as follows. The E3 ubiquitin-protein ligase activity is stimulated by PEX12/prx-12. In terms of biological role, E3 ubiquitin-protein ligase component of a retrotranslocation channel required for peroxisome organization by mediating export of the PEX5/prx-5 receptor from peroxisomes to the cytosol, thereby promoting PEX5/prx-5 recycling. The retrotranslocation channel is composed of PEX2/prx-2, PEX10/prx-10 and PEX12/prx-12; each subunit contributing transmembrane segments that coassemble into an open channel that specifically allows the passage of PEX5/prx-5 through the peroxisomal membrane. PEX10/prx-10 also regulates PEX5 recycling by acting as a E3 ubiquitin-protein ligase. When PEX5/prx-5 recycling is compromised, PEX10/prx-10 catalyzes polyubiquitination of PEX5/prx-5 during its passage through the retrotranslocation channel, leading to its degradation. This Caenorhabditis elegans protein is Peroxisome biogenesis factor 10.